The sequence spans 396 residues: GTPase Obg (396 aa).

In terms of domain architecture, Obg spans 1-159; that stretch reads MKFVDEASIY…RTLKLEMKVL (159 aa). The tract at residues 120–146 is disordered; that stretch reads GGHHGLGNTRFKSSTNRAPRQTTKGTV. Residues 129–144 are compositionally biased toward polar residues; that stretch reads RFKSSTNRAPRQTTKG. In terms of domain architecture, OBG-type G spans 160 to 333; that stretch reads ADVGLLGLPN…LCLDLMTALD (174 aa). GTP-binding positions include 166–173, 191–195, 213–216, 283–286, and 314–316; these read GLPNAGKS, FTTLV, DIPG, NKTD, and SAI. Mg(2+) contacts are provided by S173 and T193.

This sequence belongs to the TRAFAC class OBG-HflX-like GTPase superfamily. OBG GTPase family. As to quaternary structure, monomer. Mg(2+) is required as a cofactor.

The protein resides in the cytoplasm. In terms of biological role, an essential GTPase which binds GTP, GDP and possibly (p)ppGpp with moderate affinity, with high nucleotide exchange rates and a fairly low GTP hydrolysis rate. Plays a role in control of the cell cycle, stress response, ribosome biogenesis and in those bacteria that undergo differentiation, in morphogenesis control. In Marinomonas sp. (strain MWYL1), this protein is GTPase Obg.